The sequence spans 535 residues: CTP synthase (535 aa).

Positions Met1–Leu267 are amidoligase domain. CTP is bound at residue Ser13. Ser13 lines the UTP pocket. ATP is bound at residue Ser14–Ile19. Residue Tyr54 coordinates L-glutamine. Asp71 provides a ligand contact to ATP. Residues Asp71 and Glu141 each contribute to the Mg(2+) site. Residues Asp148 to Glu150, Lys188 to Gln193, and Lys224 contribute to the CTP site. UTP contacts are provided by residues Lys188–Gln193 and Lys224. Arg240–Ala242 provides a ligand contact to ATP. The Glutamine amidotransferase type-1 domain occupies Lys292 to Ser534. Residue Gly354 participates in L-glutamine binding. The Nucleophile; for glutamine hydrolysis role is filled by Cys381. L-glutamine is bound by residues Leu382 to Gln385, Glu405, and Arg462. Active-site residues include His507 and Glu509.

This sequence belongs to the CTP synthase family. In terms of assembly, homotetramer.

The enzyme catalyses UTP + L-glutamine + ATP + H2O = CTP + L-glutamate + ADP + phosphate + 2 H(+). It carries out the reaction L-glutamine + H2O = L-glutamate + NH4(+). The catalysed reaction is UTP + NH4(+) + ATP = CTP + ADP + phosphate + 2 H(+). Its pathway is pyrimidine metabolism; CTP biosynthesis via de novo pathway; CTP from UDP: step 2/2. Allosterically activated by GTP, when glutamine is the substrate; GTP has no effect on the reaction when ammonia is the substrate. The allosteric effector GTP functions by stabilizing the protein conformation that binds the tetrahedral intermediate(s) formed during glutamine hydrolysis. Inhibited by the product CTP, via allosteric rather than competitive inhibition. Functionally, catalyzes the ATP-dependent amination of UTP to CTP with either L-glutamine or ammonia as the source of nitrogen. Regulates intracellular CTP levels through interactions with the four ribonucleotide triphosphates. The polypeptide is CTP synthase (Bacillus cereus (strain AH820)).